The sequence spans 427 residues: Serine--tRNA ligase (427 aa).

231–233 (TAE) is a binding site for L-serine. Residue 262 to 264 (RSE) participates in ATP binding. Glu-285 contacts L-serine. ATP is bound at residue 349–352 (EISS). Ser-385 contacts L-serine.

This sequence belongs to the class-II aminoacyl-tRNA synthetase family. Type-1 seryl-tRNA synthetase subfamily. As to quaternary structure, homodimer. The tRNA molecule binds across the dimer.

It localises to the cytoplasm. It catalyses the reaction tRNA(Ser) + L-serine + ATP = L-seryl-tRNA(Ser) + AMP + diphosphate + H(+). The enzyme catalyses tRNA(Sec) + L-serine + ATP = L-seryl-tRNA(Sec) + AMP + diphosphate + H(+). It functions in the pathway aminoacyl-tRNA biosynthesis; selenocysteinyl-tRNA(Sec) biosynthesis; L-seryl-tRNA(Sec) from L-serine and tRNA(Sec): step 1/1. In terms of biological role, catalyzes the attachment of serine to tRNA(Ser). Is also able to aminoacylate tRNA(Sec) with serine, to form the misacylated tRNA L-seryl-tRNA(Sec), which will be further converted into selenocysteinyl-tRNA(Sec). The sequence is that of Serine--tRNA ligase from Rhizobium etli (strain ATCC 51251 / DSM 11541 / JCM 21823 / NBRC 15573 / CFN 42).